Here is a 303-residue protein sequence, read N- to C-terminus: Pseudouridine-5'-phosphate glycosidase (303 aa).

Residue E25 is the Proton donor of the active site. The substrate site is built by K87 and V107. Residue D139 coordinates Mn(2+). Position 141–143 (141–143 (SAD)) interacts with substrate. The active-site Nucleophile is K160.

The protein belongs to the pseudouridine-5'-phosphate glycosidase family. In terms of assembly, homotrimer. Mn(2+) is required as a cofactor.

The enzyme catalyses D-ribose 5-phosphate + uracil = psi-UMP + H2O. Catalyzes the reversible cleavage of pseudouridine 5'-phosphate (PsiMP) to ribose 5-phosphate and uracil. Functions biologically in the cleavage direction, as part of a pseudouridine degradation pathway. The sequence is that of Pseudouridine-5'-phosphate glycosidase from Hahella chejuensis (strain KCTC 2396).